Reading from the N-terminus, the 438-residue chain is Exodeoxyribonuclease 7 large subunit (438 aa).

Residues 405–438 (GATSTGPTDDIPSSAARLPSSPAPDARPASGAES) form a disordered region.

Belongs to the XseA family. In terms of assembly, heterooligomer composed of large and small subunits.

The protein localises to the cytoplasm. The catalysed reaction is Exonucleolytic cleavage in either 5'- to 3'- or 3'- to 5'-direction to yield nucleoside 5'-phosphates.. In terms of biological role, bidirectionally degrades single-stranded DNA into large acid-insoluble oligonucleotides, which are then degraded further into small acid-soluble oligonucleotides. This chain is Exodeoxyribonuclease 7 large subunit, found in Clavibacter michiganensis subsp. michiganensis (strain NCPPB 382).